The sequence spans 518 residues: GMP synthase [glutamine-hydrolyzing] (518 aa).

Positions T8 to N201 constitute a Glutamine amidotransferase type-1 domain. C85 acts as the Nucleophile in catalysis. Catalysis depends on residues H175 and E177. The 192-residue stretch at W202–R393 folds into the GMPS ATP-PPase domain. S229–S235 contributes to the ATP binding site.

In terms of assembly, homodimer.

It catalyses the reaction XMP + L-glutamine + ATP + H2O = GMP + L-glutamate + AMP + diphosphate + 2 H(+). It functions in the pathway purine metabolism; GMP biosynthesis; GMP from XMP (L-Gln route): step 1/1. In terms of biological role, catalyzes the synthesis of GMP from XMP. The polypeptide is GMP synthase [glutamine-hydrolyzing] (Bartonella bacilliformis (strain ATCC 35685 / KC583 / Herrer 020/F12,63)).